The sequence spans 482 residues: Glutamyl-tRNA(Gln) amidotransferase subunit A (482 aa).

Catalysis depends on charge relay system residues lysine 80 and serine 159. Serine 183 functions as the Acyl-ester intermediate in the catalytic mechanism.

This sequence belongs to the amidase family. GatA subfamily. In terms of assembly, heterotrimer of A, B and C subunits.

The catalysed reaction is L-glutamyl-tRNA(Gln) + L-glutamine + ATP + H2O = L-glutaminyl-tRNA(Gln) + L-glutamate + ADP + phosphate + H(+). In terms of biological role, allows the formation of correctly charged Gln-tRNA(Gln) through the transamidation of misacylated Glu-tRNA(Gln) in organisms which lack glutaminyl-tRNA synthetase. The reaction takes place in the presence of glutamine and ATP through an activated gamma-phospho-Glu-tRNA(Gln). In Neorickettsia sennetsu (strain ATCC VR-367 / Miyayama) (Ehrlichia sennetsu), this protein is Glutamyl-tRNA(Gln) amidotransferase subunit A.